We begin with the raw amino-acid sequence, 344 residues long: tRNA N6-adenosine threonylcarbamoyltransferase (344 aa).

Fe cation is bound by residues His110 and His114. Residues 133–137 (VVSGA), Asp166, Gly179, and Asn278 contribute to the substrate site. Residue Asp303 coordinates Fe cation.

It belongs to the KAE1 / TsaD family. Fe(2+) serves as cofactor.

It localises to the cytoplasm. The catalysed reaction is L-threonylcarbamoyladenylate + adenosine(37) in tRNA = N(6)-L-threonylcarbamoyladenosine(37) in tRNA + AMP + H(+). Its function is as follows. Required for the formation of a threonylcarbamoyl group on adenosine at position 37 (t(6)A37) in tRNAs that read codons beginning with adenine. Is involved in the transfer of the threonylcarbamoyl moiety of threonylcarbamoyl-AMP (TC-AMP) to the N6 group of A37, together with TsaE and TsaB. TsaD likely plays a direct catalytic role in this reaction. This is tRNA N6-adenosine threonylcarbamoyltransferase from Chlamydia abortus (strain DSM 27085 / S26/3) (Chlamydophila abortus).